We begin with the raw amino-acid sequence, 72 residues long: Alpha-elapitoxin-Dpp2a (72 aa).

Intrachain disulfides connect Cys-3–Cys-21, Cys-14–Cys-42, Cys-27–Cys-31, Cys-46–Cys-57, and Cys-58–Cys-63.

Belongs to the three-finger toxin family. Long-chain subfamily. Type II alpha-neurotoxin sub-subfamily. As to expression, expressed by the venom gland.

The protein localises to the secreted. Functionally, binds with high affinity to muscular (alpha-1/CHRNA1) and neuronal (alpha-7/CHRNA7) nicotinic acetylcholine receptor (nAChR) and inhibits acetylcholine from binding to the receptor, thereby impairing neuromuscular and neuronal transmission. The sequence is that of Alpha-elapitoxin-Dpp2a from Dendroaspis polylepis polylepis (Black mamba).